The chain runs to 447 residues: GTPase Der (447 aa).

EngA-type G domains follow at residues 3 to 167 and 180 to 353; these read PVVA…HLED and IKLA…KAAN. GTP is bound by residues 9–16, 56–60, 119–122, 186–193, 233–237, and 298–301; these read GRPNVGKS, DTGGF, NKAE, DTAGL, and NKWD. Positions 354 to 438 constitute a KH-like domain; that stretch reads CKMSTPILTR…PMRIEFKSST (85 aa).

The protein belongs to the TRAFAC class TrmE-Era-EngA-EngB-Septin-like GTPase superfamily. EngA (Der) GTPase family. Associates with the 50S ribosomal subunit.

In terms of biological role, GTPase that plays an essential role in the late steps of ribosome biogenesis. This is GTPase Der from Albidiferax ferrireducens (strain ATCC BAA-621 / DSM 15236 / T118) (Rhodoferax ferrireducens).